Reading from the N-terminus, the 249-residue chain is 5-amino-6-(5-phospho-D-ribitylamino)uracil phosphatase YcsE (249 aa).

Catalysis depends on Asp16, which acts as the Nucleophile. Asp16 lines the Mg(2+) pocket. Residue Met17 participates in phosphate binding. Asp18 is a Mg(2+) binding site. Residues 50–51 (TG) and Lys177 contribute to the phosphate site. Residues Asp200 and Ser201 each coordinate Mg(2+). Asn203 provides a ligand contact to phosphate.

It belongs to the HAD-like hydrolase superfamily. Cof family. It depends on Mg(2+) as a cofactor.

The catalysed reaction is 5-amino-6-(5-phospho-D-ribitylamino)uracil + H2O = 5-amino-6-(D-ribitylamino)uracil + phosphate. It functions in the pathway cofactor biosynthesis; riboflavin biosynthesis; 5-amino-6-(D-ribitylamino)uracil from GTP: step 4/4. Its function is as follows. Catalyzes the dephosphorylation of the riboflavin precursor 5-amino-6-(5-phospho-D-ribitylamino)uracil and of flavin mononucleotide (FMN) in vitro. To a lesser extent, may also catalyze the dephosphorylation of a broad range of substrates such as phosphorylated sugars and triphosphate nucleotides in vitro. This chain is 5-amino-6-(5-phospho-D-ribitylamino)uracil phosphatase YcsE (ycsE), found in Bacillus subtilis (strain 168).